The following is a 168-amino-acid chain: MPRSRINENFIDKTFSIVANILLRIIPTTSGEKRAFTYYRDGMSAQSEGNYAEALQNYYEAMRLEIDPYDRSYILYNIGLIHTSNGEHTKALEYYFRALERNPFLPQAFNNMAVICHYRGEQAIRQGDSEVAESWFNQAAEYWKQAIALTPGNYIEAQNWLKITGRFE.

3 TPR repeats span residues 35–68 (AFTYYRDGMSAQSEGNYAEALQNYYEAMRLEIDP), 72–105 (SYILYNIGLIHTSNGEHTKALEYYFRALERNPFL), and 120–153 (GEQAIRQGDSEVAESWFNQAAEYWKQAIALTPGN).

The protein belongs to the Ycf3 family.

The protein localises to the plastid. Its subcellular location is the chloroplast thylakoid membrane. Its function is as follows. Essential for the assembly of the photosystem I (PSI) complex. May act as a chaperone-like factor to guide the assembly of the PSI subunits. The polypeptide is Photosystem I assembly protein Ycf3 (Glycine max (Soybean)).